The chain runs to 287 residues: Aquaporin PIP2-1 (287 aa).

Met-1 is subject to N-acetylmethionine. At 2–39 the chain is on the cytoplasmic side; it reads AKDVEAVPGEGFQTRDYQDPPPAPFIDGAELKKWSFYR. Lys-3 is subject to N6,N6-dimethyllysine; partial. Residues 40 to 60 traverse the membrane as a helical segment; that stretch reads AVIAEFVATLLFLYITVLTVI. Residues 61–83 are Extracellular-facing; it reads GYKIQSDTDAGGVDCGGVGILGI. The helical transmembrane segment at 84 to 104 threads the bilayer; the sequence is AWAFGGMIFILVYCTAGISGG. The Cytoplasmic segment spans residues 105 to 125; it reads HINPAVTFGLFLARKVSLPRA. The NPA 1 motif lies at 107 to 109; that stretch reads NPA. The chain crosses the membrane as a helical span at residues 126 to 146; it reads LLYIIAQCLGAICGVGFVKAF. The Extracellular segment spans residues 147-167; it reads QSSYYTRYGGGANSLADGYST. A helical membrane pass occupies residues 168–188; the sequence is GTGLAAEIIGTFVLVYTVFSA. At 189 to 201 the chain is on the cytoplasmic side; the sequence is TDPKRSARDSHVP. The helical transmembrane segment at 202-222 threads the bilayer; the sequence is VLAPLPIGFAVFMVHLATIPI. Over 223–249 the chain is Extracellular; that stretch reads TGTGINPARSFGAAVIYNKSKPWDDHW. An NPA 2 motif is present at residues 228–230; sequence NPA. Residues 250–270 form a helical membrane-spanning segment; the sequence is IFWVGPFIGAAIAAFYHQFVL. Over 271–287 the chain is Cytoplasmic; that stretch reads RASGSKSLGSFRSAANV. A phosphoserine mark is found at Ser-280 and Ser-283.

This sequence belongs to the MIP/aquaporin (TC 1.A.8) family. PIP (TC 1.A.8.11) subfamily. Post-translationally, ubiquitinated by RMA1, leading to proteasomal degradation. The phosphorylation at Ser-280 and Ser-283 is altered by salt (NaCl) and hydrogen peroxide H(2)O(2) treatments. Phosphorylation of Ser-283 is required for plasma membrane targeting. In terms of tissue distribution, predominantly expressed in roots and green siliques. Also expressed at lower level above ground and in flower buds.

It is found in the cell membrane. In terms of biological role, water channel required to facilitate the transport of water across cell membrane. Probably involved in root water uptake. Its function is impaired by Hg(2+). This Arabidopsis thaliana (Mouse-ear cress) protein is Aquaporin PIP2-1 (PIP2-1).